Consider the following 152-residue polypeptide: Cell division protein SepF (152 aa).

Residues 23 to 32 show a composition bias toward basic and acidic residues; that stretch reads EVAREPEPMQ. Residues 23-42 form a disordered region; the sequence is EVAREPEPMQKKTKKEKPSK.

The protein belongs to the SepF family. As to quaternary structure, homodimer. Interacts with FtsZ.

It is found in the cytoplasm. Its function is as follows. Cell division protein that is part of the divisome complex and is recruited early to the Z-ring. Probably stimulates Z-ring formation, perhaps through the cross-linking of FtsZ protofilaments. Its function overlaps with FtsA. The polypeptide is Cell division protein SepF (Listeria innocua serovar 6a (strain ATCC BAA-680 / CLIP 11262)).